Consider the following 244-residue polypeptide: Aspartate/glutamate leucyltransferase (244 aa).

The protein belongs to the R-transferase family. Bpt subfamily.

The protein localises to the cytoplasm. The catalysed reaction is N-terminal L-glutamyl-[protein] + L-leucyl-tRNA(Leu) = N-terminal L-leucyl-L-glutamyl-[protein] + tRNA(Leu) + H(+). It carries out the reaction N-terminal L-aspartyl-[protein] + L-leucyl-tRNA(Leu) = N-terminal L-leucyl-L-aspartyl-[protein] + tRNA(Leu) + H(+). Its function is as follows. Functions in the N-end rule pathway of protein degradation where it conjugates Leu from its aminoacyl-tRNA to the N-termini of proteins containing an N-terminal aspartate or glutamate. The sequence is that of Aspartate/glutamate leucyltransferase from Paramagnetospirillum magneticum (strain ATCC 700264 / AMB-1) (Magnetospirillum magneticum).